The chain runs to 232 residues: Urease accessory protein UreF (232 aa).

Belongs to the UreF family. UreD, UreF and UreG form a complex that acts as a GTP-hydrolysis-dependent molecular chaperone, activating the urease apoprotein by helping to assemble the nickel containing metallocenter of UreC. The UreE protein probably delivers the nickel.

It is found in the cytoplasm. Its function is as follows. Required for maturation of urease via the functional incorporation of the urease nickel metallocenter. This Trichodesmium erythraeum (strain IMS101) protein is Urease accessory protein UreF.